The sequence spans 704 residues: Polyribonucleotide nucleotidyltransferase (704 aa).

Mg(2+) is bound by residues Asp-487 and Asp-493. The KH domain maps to Pro-554–Ile-613. One can recognise an S1 motif domain in the interval Gly-623–Lys-691.

This sequence belongs to the polyribonucleotide nucleotidyltransferase family. Component of the RNA degradosome, which is a multiprotein complex involved in RNA processing and mRNA degradation. It depends on Mg(2+) as a cofactor.

It is found in the cytoplasm. The catalysed reaction is RNA(n+1) + phosphate = RNA(n) + a ribonucleoside 5'-diphosphate. Its function is as follows. Involved in mRNA degradation. Catalyzes the phosphorolysis of single-stranded polyribonucleotides processively in the 3'- to 5'-direction. This Xanthomonas campestris pv. campestris (strain 8004) protein is Polyribonucleotide nucleotidyltransferase.